The chain runs to 379 residues: UDP-4-amino-4-deoxy-L-arabinose--oxoglutarate aminotransferase (379 aa).

Position 182 is an N6-(pyridoxal phosphate)lysine (Lys182).

This sequence belongs to the DegT/DnrJ/EryC1 family. ArnB subfamily. In terms of assembly, homodimer. The cofactor is pyridoxal 5'-phosphate.

It carries out the reaction UDP-4-amino-4-deoxy-beta-L-arabinose + 2-oxoglutarate = UDP-beta-L-threo-pentopyranos-4-ulose + L-glutamate. The protein operates within nucleotide-sugar biosynthesis; UDP-4-deoxy-4-formamido-beta-L-arabinose biosynthesis; UDP-4-deoxy-4-formamido-beta-L-arabinose from UDP-alpha-D-glucuronate: step 2/3. It participates in bacterial outer membrane biogenesis; lipopolysaccharide biosynthesis. Catalyzes the conversion of UDP-4-keto-arabinose (UDP-Ara4O) to UDP-4-amino-4-deoxy-L-arabinose (UDP-L-Ara4N). The modified arabinose is attached to lipid A and is required for resistance to polymyxin and cationic antimicrobial peptides. The protein is UDP-4-amino-4-deoxy-L-arabinose--oxoglutarate aminotransferase of Klebsiella pneumoniae subsp. pneumoniae (strain ATCC 700721 / MGH 78578).